A 330-amino-acid polypeptide reads, in one-letter code: ADP-L-glycero-D-manno-heptose-6-epimerase (330 aa).

Residues 11 to 12 (FI), 32 to 33 (DN), Lys-39, Lys-54, 75 to 79 (EGACS), and Asn-92 contribute to the NADP(+) site. Residue Tyr-139 is the Proton acceptor of the active site. Position 143 (Lys-143) interacts with NADP(+). A substrate-binding site is contributed by Asn-168. NADP(+) is bound by residues Val-169 and Lys-177. The active-site Proton acceptor is the Lys-177. Substrate-binding positions include Arg-179, His-186, 200 to 203 (FGEY), Arg-213, and Tyr-292.

Belongs to the NAD(P)-dependent epimerase/dehydratase family. HldD subfamily. As to quaternary structure, homopentamer. NADP(+) serves as cofactor.

It carries out the reaction ADP-D-glycero-beta-D-manno-heptose = ADP-L-glycero-beta-D-manno-heptose. It participates in nucleotide-sugar biosynthesis; ADP-L-glycero-beta-D-manno-heptose biosynthesis; ADP-L-glycero-beta-D-manno-heptose from D-glycero-beta-D-manno-heptose 7-phosphate: step 4/4. Functionally, catalyzes the interconversion between ADP-D-glycero-beta-D-manno-heptose and ADP-L-glycero-beta-D-manno-heptose via an epimerization at carbon 6 of the heptose. This Burkholderia cenocepacia (strain HI2424) protein is ADP-L-glycero-D-manno-heptose-6-epimerase.